The sequence spans 880 residues: Valine--tRNA ligase (880 aa).

Positions 49–59 match the 'HIGH' region motif; that stretch reads PNVTGKLHLGH. The 'KMSKS' region signature appears at 525-529; it reads KMSKS. Residue Lys528 coordinates ATP. The stretch at 809–880 forms a coiled coil; sequence LEGLINIDEE…VEKRIAELKN (72 aa).

It belongs to the class-I aminoacyl-tRNA synthetase family. ValS type 1 subfamily. In terms of assembly, monomer.

It localises to the cytoplasm. The enzyme catalyses tRNA(Val) + L-valine + ATP = L-valyl-tRNA(Val) + AMP + diphosphate. Catalyzes the attachment of valine to tRNA(Val). As ValRS can inadvertently accommodate and process structurally similar amino acids such as threonine, to avoid such errors, it has a 'posttransfer' editing activity that hydrolyzes mischarged Thr-tRNA(Val) in a tRNA-dependent manner. This Bacillus licheniformis (strain ATCC 14580 / DSM 13 / JCM 2505 / CCUG 7422 / NBRC 12200 / NCIMB 9375 / NCTC 10341 / NRRL NRS-1264 / Gibson 46) protein is Valine--tRNA ligase.